A 419-amino-acid polypeptide reads, in one-letter code: Voltage-gated potassium channel subunit beta-1 (419 aa).

The segment at 1 to 52 is disordered; sequence MLAARTGAAGSQISEENTKLRRQSGFSVAGKDKSPKKASENAKDSSLSPSGE. Over residues 30–43 the composition is skewed to basic and acidic residues; sequence GKDKSPKKASENAK. The NADP(+) site is built by threonine 108, tryptophan 109, glutamine 115, and aspartate 137. The active-site Proton donor/acceptor is tyrosine 142. Positions 210, 240, 241, 266, 295, 296, 297, 298, 299, 300, 306, 316, 375, 377, 381, 384, and 385 each coordinate NADP(+).

It belongs to the shaker potassium channel beta subunit family. In terms of assembly, homotetramer. Interaction with tetrameric potassium channel alpha subunits gives rise to a heterooctamer. Identified in potassium channel complexes containing KCNA1, KCNA2, KCNA4, KCNA5, KCNA6, KCNAB1 and KCNAB2. Part of a complex containing KCNA1, KCNA4 and LGI1; interaction with LGI1 inhibits down-regulation of KCNA1 channel activity. Interacts with the dimer formed by GNB1 and GNG2; this enhances KCNA1 binding. Interacts with SQSTM1. As to expression, in brain, expression is most prominent in caudate nucleus, hippocampus and thalamus. Significant expression also detected in amygdala and subthalamic nucleus. Also expressed in both healthy and cardiomyopathic heart. Up to four times more abundant in left ventricle than left atrium.

It localises to the cytoplasm. The protein resides in the membrane. Its subcellular location is the cell membrane. The catalysed reaction is a primary alcohol + NADP(+) = an aldehyde + NADPH + H(+). The enzyme catalyses a secondary alcohol + NADP(+) = a ketone + NADPH + H(+). Regulatory subunit of the voltage-gated potassium (Kv) Shaker channels composed of pore-forming and potassium-conducting alpha subunits and of regulatory beta subunits. The beta-1/KCNAB1 cytoplasmic subunit mediates closure of delayed rectifier potassium channels by physically obstructing the pore via its N-terminal domain and increases the speed of channel closure for other family members. Promotes the inactivation of Kv1.1/KCNA1, Kv1.2/KCNA2, Kv1.4/KCNA4, Kv1.5/KCNA5 and Kv1.6/KCNA6 alpha subunit-containing channels. Displays nicotinamide adenine dinucleotide phosphate (NADPH)-dependent aldoketoreductase activity by catalyzing the NADPH-dependent reduction of a variety of endogenous aldehydes and ketones. The binding of NADPH is required for efficient down-regulation of potassium channel activity. Oxidation of the bound NADPH restrains N-terminal domain from blocking the channel, thereby decreasing N-type inactivation of potassium channel activity. Its function is as follows. Isoform KvB1.2 shows no effect on KCNA1, KCNA2 or KCNB1. In Homo sapiens (Human), this protein is Voltage-gated potassium channel subunit beta-1.